Reading from the N-terminus, the 239-residue chain is O-methyltransferase ankF (239 aa).

S-adenosyl-L-methionine-binding positions include glutamate 71, 73–74, serine 79, glutamate 98, and alanine 127; that span reads GT.

The protein belongs to the class I-like SAM-binding methyltransferase superfamily. Cation-dependent O-methyltransferase family.

It catalyses the reaction NK13650 B + S-adenosyl-L-methionine = NK13650 D + S-adenosyl-L-homocysteine + H(+). The protein operates within secondary metabolite biosynthesis. Its function is as follows. O-methyltransferase; part of the ank cluster that mediates the biosynthesis of NK13650 C, a highly modified cyclo-arginine-tyrosine dipeptide. AnkF converts NK13650 B to produce NK13650 D via methylation of the C-17 phenol group. Within the pathway, the cyclodipeptide synthase ankA acts as the scaffold-generating enzyme and is responsible for formation of the cyclo-Arg-Tyr diketopiperazine (cRY) from L-Arg and L-Tyr. The ankA product cRY is desaturated by the cytochrome P450 monooxygenase ankB to yield a dehydro-cyclodipeptide intermediate. The FAD-dependent monooxygenase ankC then installs the m-OH, ankD catalyzes the attachment of L-homoserine, and ankE ligates citrate to the ankD product to yield NK13650 B. The O-methyltransferase ankF is responsible for methylation of the C-17 phenol group of NK13650 B to produce NK13650 D. Amidation of NK13650 D with L-Asp by ankG then leads to the production of NK13650 C, whereas amidation of NK13650 B produces NK13650 A. The chain is O-methyltransferase ankF from Aspergillus thermomutatus (Neosartorya pseudofischeri).